Consider the following 150-residue polypeptide: Large ribosomal subunit protein bL9 (150 aa).

The protein belongs to the bacterial ribosomal protein bL9 family.

Its function is as follows. Binds to the 23S rRNA. The chain is Large ribosomal subunit protein bL9 from Vibrio parahaemolyticus serotype O3:K6 (strain RIMD 2210633).